The following is a 449-amino-acid chain: Tubulin beta-8 chain (449 aa).

Q11, E69, S138, G142, T143, G144, N204, and N226 together coordinate GTP. Mg(2+) is bound at residue E69. The segment at 428–449 (ATADEEEGYEYEEDEVEVQEEQ) is disordered. Residues 429–449 (TADEEEGYEYEEDEVEVQEEQ) show a composition bias toward acidic residues.

This sequence belongs to the tubulin family. Dimer of alpha and beta chains. A typical microtubule is a hollow water-filled tube with an outer diameter of 25 nm and an inner diameter of 15 nM. Alpha-beta heterodimers associate head-to-tail to form protofilaments running lengthwise along the microtubule wall with the beta-tubulin subunit facing the microtubule plus end conferring a structural polarity. Microtubules usually have 13 protofilaments but different protofilament numbers can be found in some organisms and specialized cells. Requires Mg(2+) as cofactor.

It is found in the cytoplasm. Its subcellular location is the cytoskeleton. Tubulin is the major constituent of microtubules, a cylinder consisting of laterally associated linear protofilaments composed of alpha- and beta-tubulin heterodimers. Microtubules grow by the addition of GTP-tubulin dimers to the microtubule end, where a stabilizing cap forms. Below the cap, tubulin dimers are in GDP-bound state, owing to GTPase activity of alpha-tubulin. This chain is Tubulin beta-8 chain (TUBB8), found in Arabidopsis thaliana (Mouse-ear cress).